The following is a 631-amino-acid chain: MEITRSNFKDTLPKVYKAIEEADFLAIDGEFSGISDGPSVSTLTNGFDTPEERYTKLKKHSMEFLLFQFGLCTFNYDNTEAKYLMKSFNFYIFPKPFNRNSPDKKFVCQSSSIDFLANQGFDFNKVFRNGIPYLNQEEERVLRDQYEDRRSQSNGASTMSYISPNSSKTPVSIPDEQKGFIDKVVERVEDFLKNEQKSMNVEPCTGYQRKLIYQTLNWKYPRGIHVETVESEKKERYIVISKVDEEERKRMEQQKQAKEREELDDAVGFSRIIQAISSSGKLVVGHNMLLDVMHTIHQFFCQLPDELNEFKEVTNCVFPRVLDTKLMASTNPFKEIIYNTSLAELEKRLKEAPFKPPKVDSAEGFQSYNTASEQLHEAGYDAYITGLCFISMANYLGSFLSPPKDYVSCRSKIVRPFFNKLFLMRIMDIPYLNLEGPDLQPKRDNVLHVTFPKEWKTSDLYQLFSAFGNIQVSWIDDTSAFVSLSQPEQVQIAVNTSKYAESYRIQTYAEYIEKKNDESQTKRKWAEDGWKDLERKRLKTQYNSYIPQNPVFYGNCFAPSFAVKRSMSPIQEEAASDDTEEVHTHENDPSNPGATEQGKKPKNHKRQKIDSAPPETSDGGSSVLFEVPDTW.

The a divalent metal cation site is built by D28 and E30. The interval 147-173 (EDRRSQSNGASTMSYISPNSSKTPVSI) is disordered. Over residues 152 to 170 (QSNGASTMSYISPNSSKTP) the composition is skewed to polar residues. The R3H domain occupies 178–244 (KGFIDKVVER…ERYIVISKVD (67 aa)). The a divalent metal cation site is built by D291 and D381. The tract at residues 568 to 631 (SPIQEEAASD…SVLFEVPDTW (64 aa)) is disordered.

This sequence belongs to the CAF1 family. In terms of assembly, component of a complex at least composed of cpeb1, cpsf1, papd4/gld2, pabpc1/ePAB, parn and sympk. It depends on a divalent metal cation as a cofactor. In terms of processing, a 62 kDa form, which is produced by proteolytic cleavage, also exists. In terms of tissue distribution, in retina, it is constitutively present in most retinal cells, including the photoreceptors.

The protein resides in the cytoplasm. Its subcellular location is the nucleus. The catalysed reaction is Exonucleolytic cleavage of poly(A) to 5'-AMP.. 3'-exoribonuclease that has a preference for poly(A) tails of mRNAs, thereby efficiently degrading poly(A) tails. Exonucleolytic degradation of the poly(A) tail is often the first step in the decay of eukaryotic mRNAs. Required during meiotic maturation to silence certain maternal mRNAs translationally. Does not require an adenosine residue at the 3' end, however, the addition of 25 non-adenylate residues at the 3' terminus, or a 3' terminal phosphate is inhibitory. Involved in dormant mRNAs regulation during oocyte maturation by counteracting polyadenylation mediated by papd4/gld2nt in immature eggs. During maturation it is excluded from the ribonucleoprotein complex, allowing poly(A) elongation by papd4/gld2nt and activation of mRNAs. The chain is Poly(A)-specific ribonuclease PARN (parn) from Xenopus laevis (African clawed frog).